Here is a 183-residue protein sequence, read N- to C-terminus: Holliday junction branch migration complex subunit RuvA (183 aa).

The tract at residues 1-63 is domain I; the sequence is MIVGLIGVVE…EDAHLLYGFL (63 aa). The tract at residues 64–139 is domain II; it reads EEGEKILFER…FFIQDENRPA (76 aa). Ala-139 is a region of interest (flexible linker). The interval 139–183 is domain III; that stretch reads ARNEVFLALESLGFKSAEINQVLKTLKPNLSIEAAIKEALQQLRS.

The protein belongs to the RuvA family. As to quaternary structure, homotetramer. Forms an RuvA(8)-RuvB(12)-Holliday junction (HJ) complex. HJ DNA is sandwiched between 2 RuvA tetramers; dsDNA enters through RuvA and exits via RuvB. An RuvB hexamer assembles on each DNA strand where it exits the tetramer. Each RuvB hexamer is contacted by two RuvA subunits (via domain III) on 2 adjacent RuvB subunits; this complex drives branch migration. In the full resolvosome a probable DNA-RuvA(4)-RuvB(12)-RuvC(2) complex forms which resolves the HJ.

It localises to the cytoplasm. Functionally, the RuvA-RuvB-RuvC complex processes Holliday junction (HJ) DNA during genetic recombination and DNA repair, while the RuvA-RuvB complex plays an important role in the rescue of blocked DNA replication forks via replication fork reversal (RFR). RuvA specifically binds to HJ cruciform DNA, conferring on it an open structure. The RuvB hexamer acts as an ATP-dependent pump, pulling dsDNA into and through the RuvAB complex. HJ branch migration allows RuvC to scan DNA until it finds its consensus sequence, where it cleaves and resolves the cruciform DNA. This is Holliday junction branch migration complex subunit RuvA from Helicobacter pylori (strain ATCC 700392 / 26695) (Campylobacter pylori).